The chain runs to 162 residues: Caveolin-2 (162 aa).

Residues 1 to 86 (MGLETEKADV…FEISKYVIYK (86 aa)) lie on the Cytoplasmic side of the membrane. Tyr-19 bears the Phosphotyrosine; by SRC mark. Ser-20 and Ser-23 each carry phosphoserine. Tyr-27 is subject to Phosphotyrosine; by SRC. Residues 87–107 (FLTVFLAIPLAFVAGILFATL) constitute an intramembrane region (helical). Topologically, residues 108–162 (SCLHIWIIMPFVKTCLMLLPSVQTIWKSVTDVVIAPLCTSAGRSFSSVSLQLSHD) are cytoplasmic.

Belongs to the caveolin family. As to quaternary structure, monomer or homodimer. Interacts with CAV1; the interaction forms a stable heterooligomeric complex that is required for targeting to lipid rafts and for caveolae formation. Tyrosine phosphorylated forms do not form heterooligomers with the Tyr-19-phosphorylated form existing as a monomer or dimer, and the Tyr-27-form as a monomer only. Interacts (tyrosine phosphorylated form) with the SH2 domain-containing proteins, RASA1, NCK1 and SRC. Interacts (tyrosine phosphorylated form) with INSR, the interaction (Tyr-27-phosphorylated form) is increased on insulin stimulation. Interacts (Tyr-19 phosphorylated form) with MAPK1 (phosphorylated form); the interaction, promoted by insulin, leads to nuclear location and MAPK1 activation. Interacts with STAT3; the interaction is increased on insulin-induced tyrosine phosphorylation leading to STAT activation. In terms of processing, phosphorylated on serine and tyrosine residues. CAV1 promotes phosphorylation on Ser-23 which then targets the complex to the plasma membrane, lipid rafts and caveolae. Phosphorylation on both Tyr-19 and Tyr-27 is required for insulin-induced 'Ser-727' phosphorylation of STAT3 and its activation. Phosphorylation on Tyr-19 is required for insulin-induced phosphorylation of MAPK1 and DNA binding of STAT3. Tyrosine phosphorylation is induced by both EGF and insulin.

Its subcellular location is the nucleus. The protein resides in the cytoplasm. It is found in the golgi apparatus membrane. The protein localises to the cell membrane. It localises to the membrane. Its subcellular location is the caveola. Functionally, may act as a scaffolding protein within caveolar membranes. Interacts directly with G-protein alpha subunits and can functionally regulate their activity. Acts as an accessory protein in conjunction with CAV1 in targeting to lipid rafts and driving caveolae formation. Positive regulator of cellular mitogenesis of the MAPK signaling pathway. Required for the insulin-stimulated nuclear translocation and activation of MAPK1 and STAT3, and the subsequent regulation of cell cycle progression. The polypeptide is Caveolin-2 (CAV2) (Equus caballus (Horse)).